A 144-amino-acid polypeptide reads, in one-letter code: 3-dehydroquinate dehydratase (144 aa).

Tyr-24 (proton acceptor) is an active-site residue. Substrate is bound by residues Asn-73, His-79, and Asp-86. Catalysis depends on His-99, which acts as the Proton donor. Substrate is bound by residues 100–101 (LS) and Arg-110.

This sequence belongs to the type-II 3-dehydroquinase family. As to quaternary structure, homododecamer.

It carries out the reaction 3-dehydroquinate = 3-dehydroshikimate + H2O. It functions in the pathway metabolic intermediate biosynthesis; chorismate biosynthesis; chorismate from D-erythrose 4-phosphate and phosphoenolpyruvate: step 3/7. Its function is as follows. Catalyzes a trans-dehydration via an enolate intermediate. This Shewanella putrefaciens (strain CN-32 / ATCC BAA-453) protein is 3-dehydroquinate dehydratase.